Reading from the N-terminus, the 808-residue chain is Phospholipase D alpha 1 (808 aa).

The region spanning 1–125 (MAHYLMHGTL…IRGDQVDRWV (125 aa)) is the C2 domain. A Ca(2+)-binding site is contributed by Asp-186. A PLD phosphodiesterase 1 domain is found at 326 to 364 (TMFTHHQKIVVVDGEMPSGESQMRRIVSFVGGIDLCDGR). Catalysis depends on residues His-331, Lys-333, and Asp-338. Residue His-331 participates in a 1,2-diacyl-sn-glycero-3-phosphate binding. Ca(2+) contacts are provided by His-370 and His-404. Residues Gln-520 and His-659 each contribute to the a 1,2-diacyl-sn-glycero-3-phosphate site. One can recognise a PLD phosphodiesterase 2 domain in the interval 654–681 (FMIYVHTKMMIVDDEYIIVGSANINQRS). Catalysis depends on residues His-659, Lys-661, and Asp-666. Glu-720 contacts Ca(2+).

Belongs to the phospholipase D family. C2-PLD subfamily. Ca(2+) is required as a cofactor.

It carries out the reaction a 1,2-diacyl-sn-glycero-3-phosphocholine + H2O = a 1,2-diacyl-sn-glycero-3-phosphate + choline + H(+). Its function is as follows. Hydrolyzes glycerol-phospholipids at the terminal phosphodiesteric bond. Plays an important role in various cellular processes. The sequence is that of Phospholipase D alpha 1 from Carica papaya (Papaya).